The following is a 367-amino-acid chain: Anhydro-N-acetylmuramic acid kinase (367 aa).

Position 13 to 20 (Gly13 to Asp20) interacts with ATP.

The protein belongs to the anhydro-N-acetylmuramic acid kinase family.

It carries out the reaction 1,6-anhydro-N-acetyl-beta-muramate + ATP + H2O = N-acetyl-D-muramate 6-phosphate + ADP + H(+). It participates in amino-sugar metabolism; 1,6-anhydro-N-acetylmuramate degradation. The protein operates within cell wall biogenesis; peptidoglycan recycling. Its function is as follows. Catalyzes the specific phosphorylation of 1,6-anhydro-N-acetylmuramic acid (anhMurNAc) with the simultaneous cleavage of the 1,6-anhydro ring, generating MurNAc-6-P. Is required for the utilization of anhMurNAc either imported from the medium or derived from its own cell wall murein, and thus plays a role in cell wall recycling. The sequence is that of Anhydro-N-acetylmuramic acid kinase from Neisseria gonorrhoeae (strain ATCC 700825 / FA 1090).